Here is a 221-residue protein sequence, read N- to C-terminus: Glutathione S-transferase (221 aa).

Methionine 1 bears the N-acetylmethionine mark. Residue alanine 2 is modified to N-acetylalanine; in Glutathione S-transferase, N-terminally processed. The GST N-terminal domain maps to glycine 3–glycine 82. Glutathione is bound by residues tyrosine 9, lysine 45, glutamine 53–valine 54, and glutamine 66–threonine 67. The region spanning aspartate 84 to aspartate 208 is the GST C-terminal domain.

It belongs to the GST superfamily. Alpha family. As to quaternary structure, homodimer or heterodimer of GSTA1 and GSTA2.

The protein localises to the cytoplasm. It catalyses the reaction RX + glutathione = an S-substituted glutathione + a halide anion + H(+). The enzyme catalyses prostaglandin A2 + glutathione = prostaglandin A2-S-(R)-glutathione. The catalysed reaction is prostaglandin J2 + glutathione = prostaglandin J2-S-(R)-glutathione. It carries out the reaction (13S)-hydroperoxy-(9Z,11E)-octadecadienoate + 2 glutathione = (13S)-hydroxy-(9Z,11E)-octadecadienoate + glutathione disulfide + H2O. It catalyses the reaction androst-5-ene-3,17-dione = androst-4-ene-3,17-dione. In terms of biological role, glutathione S-transferase that catalyzes the nucleophilic attack of the sulfur atom of glutathione on the electrophilic groups of a wide range of exogenous and endogenous compounds. Involved in the formation of glutathione conjugates of both prostaglandin A2 (PGA2) and prostaglandin J2 (PGJ2). It also catalyzes the isomerization of D5-androstene-3,17-dione (AD) into D4-androstene-3,17-dione and may therefore play an important role in hormone biosynthesis. Through its glutathione-dependent peroxidase activity toward the fatty acid hydroperoxide (13S)-hydroperoxy-(9Z,11E)-octadecadienoate/13-HPODE it is also involved in the metabolism of oxidized linoleic acid. This Antechinus stuartii (Brown marsupial mouse) protein is Glutathione S-transferase.